A 317-amino-acid polypeptide reads, in one-letter code: Ribonuclease Z (317 aa).

Histidine 63, histidine 65, aspartate 67, histidine 68, histidine 143, aspartate 213, and histidine 273 together coordinate Zn(2+). Aspartate 67 (proton acceptor) is an active-site residue.

Belongs to the RNase Z family. As to quaternary structure, homodimer. The cofactor is Zn(2+).

It carries out the reaction Endonucleolytic cleavage of RNA, removing extra 3' nucleotides from tRNA precursor, generating 3' termini of tRNAs. A 3'-hydroxy group is left at the tRNA terminus and a 5'-phosphoryl group is left at the trailer molecule.. Its function is as follows. Zinc phosphodiesterase, which displays some tRNA 3'-processing endonuclease activity. Probably involved in tRNA maturation, by removing a 3'-trailer from precursor tRNA. This Methanocaldococcus jannaschii (strain ATCC 43067 / DSM 2661 / JAL-1 / JCM 10045 / NBRC 100440) (Methanococcus jannaschii) protein is Ribonuclease Z.